Consider the following 311-residue polypeptide: Probable dihydroorotate dehydrogenase A (fumarate) (311 aa).

Residues K45, 69 to 73, and N128 each bind substrate; that span reads NSMGL. 45–46 lines the FMN pocket; it reads KT. Residue N128 coordinates FMN. C131 serves as the catalytic Nucleophile. FMN contacts are provided by K165 and V193. 194 to 195 contributes to the substrate binding site; it reads NS. FMN-binding positions include G220, 248-249, and 270-271; these read GG and GT.

Belongs to the dihydroorotate dehydrogenase family. Type 1 subfamily. Homodimer. It depends on FMN as a cofactor.

The protein resides in the cytoplasm. It catalyses the reaction (S)-dihydroorotate + fumarate = orotate + succinate. It participates in pyrimidine metabolism; UMP biosynthesis via de novo pathway. In terms of biological role, catalyzes the conversion of dihydroorotate to orotate with fumarate as the electron acceptor. The sequence is that of Probable dihydroorotate dehydrogenase A (fumarate) (pyrDA) from Streptococcus pneumoniae serotype 4 (strain ATCC BAA-334 / TIGR4).